The primary structure comprises 552 residues: Phosphoglucomutase (552 aa).

Serine 143 acts as the Phosphoserine intermediate in catalysis. Serine 143, aspartate 295, aspartate 297, and aspartate 299 together coordinate Mg(2+).

It belongs to the phosphohexose mutase family. It depends on Mg(2+) as a cofactor.

The enzyme catalyses alpha-D-glucose 1-phosphate = alpha-D-glucose 6-phosphate. The protein operates within glycolipid metabolism; diglucosyl-diacylglycerol biosynthesis. Its function is as follows. Catalyzes the interconversion between glucose-6-phosphate and alpha-glucose-1-phosphate. This is the first step in the biosynthesis of diglucosyl-diacylglycerol (Glc2-DAG), i.e. the predominant glycolipid found in the S.aureus membrane, which is also used as a membrane anchor for lipoteichoic acid (LTA). In Staphylococcus aureus (strain bovine RF122 / ET3-1), this protein is Phosphoglucomutase (pgcA).